Reading from the N-terminus, the 119-residue chain is Large ribosomal subunit protein uL24 (119 aa).

The protein belongs to the universal ribosomal protein uL24 family. Part of the 50S ribosomal subunit.

In terms of biological role, one of two assembly initiator proteins, it binds directly to the 5'-end of the 23S rRNA, where it nucleates assembly of the 50S subunit. One of the proteins that surrounds the polypeptide exit tunnel on the outside of the subunit. The sequence is that of Large ribosomal subunit protein uL24 from Leptospira interrogans serogroup Icterohaemorrhagiae serovar copenhageni (strain Fiocruz L1-130).